We begin with the raw amino-acid sequence, 232 residues long: Ribonuclease 3 (232 aa).

Residues 7 to 136 (AALLEDTIDY…LLGAVFCDGG (130 aa)) enclose the RNase III domain. Glu-49 contacts Mg(2+). Asp-53 is an active-site residue. Mg(2+)-binding residues include Asn-122 and Glu-125. Residue Glu-125 is part of the active site. The DRBM domain maps to 163–232 (DYKTRLQERL…AKQALEYLEE (70 aa)).

Belongs to the ribonuclease III family. In terms of assembly, homodimer. Requires Mg(2+) as cofactor.

Its subcellular location is the cytoplasm. The catalysed reaction is Endonucleolytic cleavage to 5'-phosphomonoester.. Functionally, digests double-stranded RNA. Involved in the processing of primary rRNA transcript to yield the immediate precursors to the large and small rRNAs (23S and 16S). Processes some mRNAs, and tRNAs when they are encoded in the rRNA operon. Processes pre-crRNA and tracrRNA of type II CRISPR loci if present in the organism. The protein is Ribonuclease 3 of Syntrophotalea carbinolica (strain DSM 2380 / NBRC 103641 / GraBd1) (Pelobacter carbinolicus).